We begin with the raw amino-acid sequence, 124 residues long: UPF0299 membrane protein VP1300 (124 aa).

A run of 4 helical transmembrane segments spans residues 9–29 (LIQLLISLFLIMGALGIGITI), 35–55 (VSVPGSVIGMLVLFFSMTLGL), 72–92 (MILLFVPISVGLMQHFDMLLA), and 95–115 (LPIIASAVGGSLIVLVSLAWL).

Belongs to the UPF0299 family.

It is found in the cell inner membrane. The sequence is that of UPF0299 membrane protein VP1300 from Vibrio parahaemolyticus serotype O3:K6 (strain RIMD 2210633).